The sequence spans 194 residues: Lysozyme g-like protein 1 (194 aa).

Positions 1 to 19 are cleaved as a signal peptide; that stretch reads MSALWLLLGLLALMDLSES. Intrachain disulfides connect C24/C80 and C38/C49.

This sequence belongs to the glycosyl hydrolase 23 family.

It localises to the secreted. This chain is Lysozyme g-like protein 1 (LYG1), found in Homo sapiens (Human).